The chain runs to 263 residues: Chromosomal replication initiator protein DnaA (263 aa).

Position 1 (Asp1) is a region of interest, domain I, interacts with DnaA modulators. A region of interest (domain II) is located at residue Asp1. Positions 1–177 (DSGLGKTHLL…GIINKIEFSI (177 aa)) are domain III, AAA+ region. Residues Gly3, Gly5, Lys6, and Thr7 each contribute to the ATP site. The interval 178–263 (IQDNSAAPKI…KNYSEIGVAF (86 aa)) is domain IV, binds dsDNA.

The protein belongs to the DnaA family. As to quaternary structure, oligomerizes as a right-handed, spiral filament on DNA at oriC.

Its subcellular location is the cytoplasm. Functionally, plays an essential role in the initiation and regulation of chromosomal replication. ATP-DnaA binds to the origin of replication (oriC) to initiate formation of the DNA replication initiation complex once per cell cycle. Binds the DnaA box (a 9 base pair repeat at the origin) and separates the double-stranded (ds)DNA. Forms a right-handed helical filament on oriC DNA; dsDNA binds to the exterior of the filament while single-stranded (ss)DNA is stabiized in the filament's interior. The ATP-DnaA-oriC complex binds and stabilizes one strand of the AT-rich DNA unwinding element (DUE), permitting loading of DNA polymerase. After initiation quickly degrades to an ADP-DnaA complex that is not apt for DNA replication. Binds acidic phospholipids. The polypeptide is Chromosomal replication initiator protein DnaA (Spiroplasma apis).